Consider the following 211-residue polypeptide: Inactive ribonuclease-like protein 10 (211 aa).

An N-terminal signal peptide occupies residues 1-24 (MKLTLVQIFFMMLLLLLGLGVGLG).

The protein belongs to the pancreatic ribonuclease family. Post-translationally, the N-terminus is blocked. Glycosylated.

It localises to the secreted. In terms of biological role, secreted proximal epididymal protein required for post-testicular sperm maturation and male fertility. May be involved in sperm adhesion to the egg zona pellucida. Does not have ribonuclease activity. The protein is Inactive ribonuclease-like protein 10 (RNASE10) of Bos taurus (Bovine).